The primary structure comprises 969 residues: Putative zinc protease mug138 (969 aa).

A Zn(2+)-binding site is contributed by His-68. Catalysis depends on Glu-71, which acts as the Proton acceptor. Residues His-72 and Glu-149 each coordinate Zn(2+).

It belongs to the peptidase M16 family.

It is found in the cytoplasm. Functionally, has a role in meiosis. This is Putative zinc protease mug138 (mug138) from Schizosaccharomyces pombe (strain 972 / ATCC 24843) (Fission yeast).